The sequence spans 1119 residues: uncharacterized protein (1119 aa).

A signal peptide spans 1–21 (MNNIYISLYIFFISYIIQLCF). Residues 170–206 (NKKKLDKEKKKNVIELKEYLEDLKKRMFDMQKRLNDI) are a coiled coil. Disordered regions lie at residues 606–627 (NNNT…IFNN) and 782–905 (ASVQ…EHDE). A compositionally biased stretch (basic and acidic residues) spans 788-891 (DKGEDNNDND…EKDKSRDDNK (104 aa)). Residues 890–920 (NKAQNNNSTDNEEHDEITEQIGFLKNHNQKY) adopt a coiled-coil conformation.

This is an uncharacterized protein from Plasmodium falciparum (isolate 3D7).